Here is a 54-residue protein sequence, read N- to C-terminus: Rubredoxin-1 (54 aa).

The Rubredoxin-like domain occupies 1–52 (MKKWECVVCGFIYDEAEGLPDEGIEPGTAWNNVPEDWVCPDCGVGKDDFEMV). 4 residues coordinate Fe cation: cysteine 6, cysteine 9, cysteine 39, and cysteine 42.

This sequence belongs to the rubredoxin family. Fe(3+) serves as cofactor.

The protein resides in the cytoplasm. Its pathway is hydrocarbon metabolism; alkane degradation. Involved in the hydrocarbon hydroxylating system, which transfers electrons from NADH to rubredoxin reductase and then through rubredoxin to alkane 1 monooxygenase. This chain is Rubredoxin-1 (rubA), found in Alcanivorax borkumensis (strain ATCC 700651 / DSM 11573 / NCIMB 13689 / SK2).